A 600-amino-acid polypeptide reads, in one-letter code: Elongation factor 4 (600 aa).

Residues Asp13–Arg194 enclose the tr-type G domain. Residues Asp25–Thr30 and Asn141–Asp144 each bind GTP.

It belongs to the TRAFAC class translation factor GTPase superfamily. Classic translation factor GTPase family. LepA subfamily.

It is found in the cell membrane. It catalyses the reaction GTP + H2O = GDP + phosphate + H(+). In terms of biological role, required for accurate and efficient protein synthesis under certain stress conditions. May act as a fidelity factor of the translation reaction, by catalyzing a one-codon backward translocation of tRNAs on improperly translocated ribosomes. Back-translocation proceeds from a post-translocation (POST) complex to a pre-translocation (PRE) complex, thus giving elongation factor G a second chance to translocate the tRNAs correctly. Binds to ribosomes in a GTP-dependent manner. The sequence is that of Elongation factor 4 from Rubrobacter xylanophilus (strain DSM 9941 / JCM 11954 / NBRC 16129 / PRD-1).